Reading from the N-terminus, the 214-residue chain is Predicted GPI-anchored protein 57 (214 aa).

The N-terminal stretch at 1 to 18 (MLFTQLIILFTFISQIIC) is a signal peptide. The tract at residues 36–101 (RGSSGHSSGG…SSGSSSGSRN (66 aa)) is disordered. Gly residues predominate over residues 42-60 (SSGGGHSSSGSHSSGGGHS). Positions 76–85 (SGSSSGSSSG) are enriched in low complexity. The N-linked (GlcNAc...) asparagine glycan is linked to asparagine 182. Glycine 191 carries GPI-anchor amidated glycine lipidation. Positions 192–214 (VSLNIPSTHFYVIGLAAAYSIVL) are cleaved as a propeptide — removed in mature form.

It belongs to the PGA37 family.

Its subcellular location is the secreted. The protein localises to the cell membrane. Its function is as follows. Predicted GPI-anchored protein which may have a role during host infection. This chain is Predicted GPI-anchored protein 57 (PGA57), found in Candida albicans (strain SC5314 / ATCC MYA-2876) (Yeast).